The following is a 652-amino-acid chain: Forkhead box protein O1 (652 aa).

Disordered regions lie at residues 1-62 and 112-154; these read MAEA…ASAS and VHPA…SSRR. Phosphothreonine; by PKB/AKT1 or PKB/AKT2 and SGK1 is present on Thr-24. Positions 35-62 are enriched in low complexity; the sequence is SNSTTSSPAPSGGAAANPDAAASLASAS. A compositionally biased stretch (pro residues) spans 114–133; sequence PAPPQPPPTGPLSQPPPVPP. Over residues 134-146 the composition is skewed to low complexity; sequence SAAAAAGPLAGQP. Residues 156-232 constitute a DNA-binding region (fork-head); it reads AWGNLSYADL…VQNEGTGKSS (77 aa). 2 DNA-binding regions span residues 208–215 and 231–234; these read NSIRHNLS and SSWW. Ser-209 bears the Phosphoserine; by STK4/MST1 mark. Residues Ser-215, Ser-231, and Ser-232 each carry the phosphoserine modification. Disordered stretches follow at residues 231 to 342 and 383 to 410; these read SSWW…DVHS and SLTV…PNTS. Lys-242 and Lys-245 each carry N6-acetyllysine. Ser-246 is modified (phosphoserine; by CDK1). Residues Arg-248 and Arg-250 each carry the omega-N-methylarginine; by PRMT1 modification. A Nuclear localization signal motif is present at residues 248–250; it reads RRR. The residue at position 253 (Ser-253) is a Phosphoserine; by PKB/AKT1 and SGK1. N6-acetyllysine occurs at positions 259, 262, and 271. A compositionally biased stretch (basic residues) spans 261–272; the sequence is AKSRGRAAKKKA. A sufficient for interaction with NLK region spans residues 280-562; it reads GPGDSPGSQF…TPVKTPLQVP (283 aa). A phosphoserine mark is found at Ser-284 and Ser-295. The span at 306–323 shows a compositional bias: polar residues; that stretch reads NWSTFRPRTSSNASTISG. Ser-316 bears the Phosphoserine; by PKB/AKT1 or PKB/AKT2 mark. At Ser-319 the chain carries Phosphoserine; by CK1 and SGK1. Phosphoserine; by CK1 is present on Ser-322. Ser-326 is modified (phosphoserine). Phosphothreonine is present on Thr-330. Residues 360 to 456 form a required for interaction with RUNX2 region; that stretch reads SEISNPENME…GGLNQYNCAP (97 aa). A compositionally biased stretch (polar residues) spans 392 to 401; sequence PGSMMQQTPC. Lys-420 is subject to N6-acetyllysine. The short motif at 459–463 is the Required for interaction with SIRT1 element; it reads LKELL.

As to quaternary structure, interacts with EP300 and CREBBP; the interactions acetylate FOXO1. Interacts with the 14-3-3 proteins, YWHAG and YWHAZ; the interactions require insulin-stimulated phosphorylation on Thr-24, promote nuclear exit and loss of transcriptional activity. Interacts with SKP2; the interaction ubiquitinates FOXO1 leading to its proteasomal degradation. Interacts with PMRT1; methylates FOXO1, prevents PKB/AKT1 phosphorylation and retains FOXO1 in the nucleus. Interacts (via an N-terminal domain) with FCOR; the interaction is direct, occurs in a forskolin-independent manner and prevents SIRT1 binding to FOXO1. Interacts (via the C-terminal half) with ATF4 (via its DNA-binding domain); the interaction occurs in osteoblasts, regulates glucose homeostasis via suppression of beta-cell proliferation and subsequent decrease in insulin production. Interacts with RUNX2; the interaction inhibits RUNX2 transcriptional activity and mediates the IGF1/insulin-dependent BGLAP expression in osteoblasts. Interacts with PPP2R1A; the interaction regulates the dephosphorylation of FOXO1 at Thr-24 and Ser-253 leading to its nuclear import. Binds to CDK1. Interacts with LRPPRC. Interacts with RUNX2; the interaction inhibits RUNX2 transcriptional activity and mediates the IGF1/insulin-dependent BGLAP expression in osteoblasts. Interacts with NLK. Interacts with SIRT1; the interaction results in the deacetylation of FOXO1 leading to activation of FOXO1-mediated transcription of genes involved in DNA repair and stress resistance. The interaction requires the presence of KRIT1 and is inhibited by FCOR. Interacts with SIRT2; the interaction is disrupted in response to oxidative stress or serum deprivation, leading to increased level of acetylated FOXO1, which promotes stress-induced autophagy by stimulating E1-like activating enzyme ATG7. Interacts (acetylated form) with ATG7; the interaction is increased in response to oxidative stress or serum deprivation and promotes the autophagic process leading to cell death. Interacts (acetylated form) with PPARG. Interacts with XBP1 isoform 2; this interaction is direct and leads to FOXO1 ubiquitination and degradation via the proteasome pathway. Interacts (via the Fork-head domain) with CEBPA; the interaction increases when FOXO1 is deacetylated. Interacts with WDFY2. Forms a complex with WDFY2 and AKT1. Interacts with CRY1. Interacts with PPIA/CYPA; the interaction promotes FOXO1 dephosphorylation, nuclear accumulation and transcriptional activity. Interacts with TOX4; FOXO1 is required for full induction of TOX4-dependent activity and the interaction is inhibited by insulin. Interacts (when phosphorylated on Ser-253) with STUB1/CHIP. In terms of processing, phosphorylation by NLK promotes nuclear export and inhibits the transcriptional activity. In response to growth factors, phosphorylation on Thr-24, Ser-253 and Ser-319 by PKB/AKT1 promotes nuclear export and inactivation of transactivational activity. Phosphorylation on Thr-24 is required for binding 14-3-3 proteins. Phosphorylation of Ser-253 decreases DNA-binding activity and promotes the phosphorylation of Thr-24 and Ser-316, permitting phosphorylation of Ser-319 and Ser-322, probably by CDK1, leading to nuclear exclusion and loss of function. Stress signals, such as response to oxygen or nitric oxide, attenuate the PKB/AKT1-mediated phosphorylation leading to nuclear retention. Phosphorylation of Ser-326 is independent of IGF1 and leads to reduced function. Dephosphorylated on Thr-24 and Ser-253 by PP2A in beta-cells under oxidative stress leading to nuclear retention. Phosphorylation of Ser-246 by CDK1 disrupts binding of 14-3-3 proteins leading to nuclear accumulation and has no effect on DNA-binding nor transcriptional activity. Phosphorylation by STK4/MST1 on Ser-209, upon oxidative stress, inhibits binding to 14-3-3 proteins and nuclear export. PPIA/CYPA promotes its dephosphorylation on Ser-253. Post-translationally, ubiquitinated by SKP2. Ubiquitinated, leading to proteasomal degradation. Ubiquitinated by STUB1/CHIP; when Ser-253 is phosphorylated. Methylation inhibits PKB/AKT1-mediated phosphorylation at Ser-253, promoting nuclear retention and increasing the transcriptional activity and cell death. Methylation increased by oxidative stress. In terms of processing, acetylation at Lys-259 and Lys-271 are necessary for autophagic cell death induction. Deacetylated by SIRT2 in response to oxidative stress or serum deprivation, thereby negatively regulating FOXO1-mediated autophagic cell death. Once in the nucleus, acetylated by CREBBP/EP300. Acetylation diminishes the interaction with target DNA and attenuates the transcriptional activity. It increases the phosphorylation at Ser-253, and is required for the transcriptional inhibition by FCOR. Deacetylation by SIRT1 results in reactivation of the transcriptional activity. Acetylation of FOXO1 diminishes its binding to PPARG in adipocytes. Deacetylated by SIRT2; deacetylation of FOXO1 directly increases its repressive binding to PPARG and inhibits adipocyte differentiation. Oxidative stress by hydrogen peroxide treatment appears to promote deacetylation and uncoupling of insulin-induced phosphorylation. By contrast, resveratrol acts independently of acetylation. Acetylated at Lys-420, promoting its localization to the nucleus and transcription factor activity. Deacetylation at Lys-420 by SIRT6, promotes its translocation into the cytoplasm, preventing its transcription factor activity. Deacetylation and subsequent inhibition by SIRT6 has different effects depending on cell types: it inhibits gluconeogenesis in hepatocytes, promotes glucose sensing in pancreatic beta-cells and regulates lipid catabolism in brown adipocytes. Expressed in liver, white and brown adipose tissues (at protein level).

The protein localises to the cytoplasm. It is found in the nucleus. Its function is as follows. Transcription factor that is the main target of insulin signaling and regulates metabolic homeostasis in response to oxidative stress. Binds to the insulin response element (IRE) with consensus sequence 5'-TT[G/A]TTTTG-3' and the related Daf-16 family binding element (DBE) with consensus sequence 5'-TT[G/A]TTTAC-3'. Activity suppressed by insulin. Main regulator of redox balance and osteoblast numbers and controls bone mass. Orchestrates the endocrine function of the skeleton in regulating glucose metabolism. Also acts as a key regulator of chondrogenic commitment of skeletal progenitor cells in response to lipid availability: when lipids levels are low, translocates to the nucleus and promotes expression of SOX9, which induces chondrogenic commitment and suppresses fatty acid oxidation. Acts synergistically with ATF4 to suppress osteocalcin/BGLAP activity, increasing glucose levels and triggering glucose intolerance and insulin insensitivity. Also suppresses the transcriptional activity of RUNX2, an upstream activator of osteocalcin/BGLAP. Acts as an inhibitor of glucose sensing in pancreatic beta cells by acting as a transcription repressor and suppressing expression of PDX1. In hepatocytes, promotes gluconeogenesis by acting together with PPARGC1A and CEBPA to activate the expression of genes such as IGFBP1, G6PC1 and PCK1. Also promotes gluconeogenesis by directly promoting expression of PPARGC1A and G6PC1. Important regulator of cell death acting downstream of CDK1, PKB/AKT1 and STK4/MST1. Promotes neural cell death. Mediates insulin action on adipose tissue. Regulates the expression of adipogenic genes such as PPARG during preadipocyte differentiation and, adipocyte size and adipose tissue-specific gene expression in response to excessive calorie intake. Regulates the transcriptional activity of GADD45A and repair of nitric oxide-damaged DNA in beta-cells. Required for the autophagic cell death induction in response to starvation or oxidative stress in a transcription-independent manner. Mediates the function of MLIP in cardiomyocytes hypertrophy and cardiac remodeling. Positive regulator of apoptosis in cardiac smooth muscle cells as a result of its transcriptional activation of pro-apoptotic genes. Regulates endothelial cell (EC) viability and apoptosis in a PPIA/CYPA-dependent manner via transcription of CCL2 and BCL2L11 which are involved in EC chemotaxis and apoptosis. This Mus musculus (Mouse) protein is Forkhead box protein O1 (Foxo1).